The sequence spans 659 residues: ATP-binding cassette sub-family D member 3 (659 aa).

The segment at 1–61 is interaction with PEX19; that stretch reads MAAFSKYLTA…GKKERAVVDK (61 aa). Residue asparagine 12 is glycosylated (N-linked (GlcNAc...) asparagine). Lysine 61 carries the N6-acetyllysine modification. The chain crosses the membrane as a helical span at residues 84–104; it reads GYLVLIAVMLVSRTYCDVWMI. Residues 85–372 enclose the ABC transmembrane type-1 domain; the sequence is YLVLIAVMLV…MLLRMSQALG (288 aa). An N-linked (GlcNAc...) asparagine glycan is attached at asparagine 106. The chain crosses the membrane as a helical span at residues 126 to 146; it reads LLNFIAAMPLISLVNNFLKYG. Asparagine 206 carries N-linked (GlcNAc...) asparagine glycosylation. The chain crosses the membrane as a helical span at residues 224-244; that stretch reads AIGAQGPASMMAYLVVSGLFL. Lysine 260 carries the post-translational modification N6-acetyllysine. Residues 313–333 traverse the membrane as a helical segment; it reads MGFIDSIIAKYLATVVGYLVV. Lysine 399 carries the post-translational modification N6-acetyllysine. The 220-residue stretch at 440 to 659 folds into the ABC transporter domain; that stretch reads IKFDHVPLAT…ITEDTVEFGS (220 aa). An ATP-binding site is contributed by 473-480; it reads GPNGCGKS. The residue at position 533 (lysine 533) is an N6-acetyllysine. Serine 659 is modified (phosphoserine).

This sequence belongs to the ABC transporter superfamily. ABCD family. Peroxisomal fatty acyl CoA transporter (TC 3.A.1.203) subfamily. As to quaternary structure, homodimers. Can form heterodimers with ABCD1 and ABCD2. Dimerization is necessary to form an active transporter. Interacts with PEX19; mediates the targeting of ABCD3 to peroxisomes. In terms of processing, ubiquitinated by PEX2 during pexophagy in response to starvation, leading to its degradation.

It is found in the peroxisome membrane. It catalyses the reaction a very long-chain fatty acyl-CoA + H2O = a very long-chain fatty acid + CoA + H(+). The enzyme catalyses a very long-chain fatty acid(in) + ATP + H2O = a very long-chain fatty acid(out) + ADP + phosphate + H(+). It carries out the reaction a long-chain fatty acyl-CoA + H2O = a long-chain fatty acid + CoA + H(+). The catalysed reaction is a long-chain fatty acid(in) + ATP + H2O = a long-chain fatty acid(out) + ADP + phosphate + H(+). It catalyses the reaction pristanoyl-CoA + H2O = 2,6,10,14-tetramethylpentadecanoate + CoA + H(+). The enzyme catalyses 2,6,10,14-tetramethylpentadecanoate(in) + ATP + H2O = 2,6,10,14-tetramethylpentadecanoate(out) + ADP + phosphate + H(+). It carries out the reaction hexadecanedioyl-CoA + H2O = hexadecanedioate + CoA + H(+). The catalysed reaction is hexadecanedioate(in) + ATP + H2O = hexadecanedioate(out) + ADP + phosphate + H(+). It catalyses the reaction (5Z,8Z,11Z,14Z,17Z)-eicosapentaenoyl-CoA + H2O = (5Z,8Z,11Z,14Z,17Z)-eicosapentaenoate + CoA + H(+). The enzyme catalyses (5Z,8Z,11Z,14Z,17Z)-eicosapentaenoate(in) + ATP + H2O = (5Z,8Z,11Z,14Z,17Z)-eicosapentaenoate(out) + ADP + phosphate + H(+). It carries out the reaction (4Z,7Z,10Z,13Z,16Z,19Z)-docosahexaenoyl-CoA + H2O = (4Z,7Z,10Z,13Z,16Z,19Z)-docosahexaenoate + CoA + H(+). The catalysed reaction is (4Z,7Z,10Z,13Z,16Z,19Z)-docosahexaenoate(in) + ATP + H2O = (4Z,7Z,10Z,13Z,16Z,19Z)-docosahexaenoate(out) + ADP + phosphate + H(+). Its function is as follows. Broad substrate specificity ATP-dependent transporter of the ATP-binding cassette (ABC) family that catalyzes the transport of long-chain fatty acids (LCFA)-CoA, dicarboxylic acids-CoA, long-branched-chain fatty acids-CoA and bile acids from the cytosol to the peroxisome lumen for beta-oxydation. Has fatty acyl-CoA thioesterase and ATPase activities. Probably hydrolyzes fatty acyl-CoAs into free fatty acids prior to their ATP-dependent transport into peroxisomes. Thus, play a role in regulation of LCFAs and energy metabolism namely, in the degradation and biosynthesis of fatty acids by beta-oxidation. The protein is ATP-binding cassette sub-family D member 3 of Homo sapiens (Human).